Reading from the N-terminus, the 1053-residue chain is Ubiquitin-like modifier-activating enzyme 6 (1053 aa).

M1 bears the N-acetylmethionine mark. R46 lines the ATP pocket. T54 carries the post-translational modification Phosphothreonine. Residues A470 and D497 each coordinate ATP. Mg(2+)-binding residues include D499 and E502. ATP is bound by residues N505, R508, Q509, and K521. K544 carries the N6-acetyllysine modification. Residue V545 participates in ATP binding. Position 569 (D569) interacts with Mg(2+). N570 contacts ATP. The active-site Glycyl thioester intermediate is the C625. The residue at position 729 (K729) is an N6-acetyllysine. Residue S737 is modified to Phosphoserine.

This sequence belongs to the ubiquitin-activating E1 family. Forms a thioester with UBD in cells stimulated with tumor necrosis factor-alpha (TNFa) and interferon-gamma (IFNg).

The catalysed reaction is ATP + ubiquitin + [E1 ubiquitin-activating enzyme]-L-cysteine = AMP + diphosphate + S-ubiquitinyl-[E1 ubiquitin-activating enzyme]-L-cysteine.. It functions in the pathway protein modification; protein ubiquitination. Its function is as follows. Activates ubiquitin by first adenylating its C-terminal glycine residue with ATP, and thereafter linking this residue to the side chain of a cysteine residue in E1, yielding a ubiquitin-E1 thioester and free AMP. Specific for ubiquitin, does not activate ubiquitin-like peptides. Also activates UBD/FAT10 conjugation via adenylation of its C-terminal glycine. Differs from UBE1 in its specificity for substrate E2 charging. Does not charge cell cycle E2s, such as CDC34. Essential for embryonic development. The protein is Ubiquitin-like modifier-activating enzyme 6 (Uba6) of Mus musculus (Mouse).